An 89-amino-acid polypeptide reads, in one-letter code: Small ribosomal subunit protein uS15 (89 aa).

Belongs to the universal ribosomal protein uS15 family. As to quaternary structure, part of the 30S ribosomal subunit. Forms a bridge to the 50S subunit in the 70S ribosome, contacting the 23S rRNA.

Its function is as follows. One of the primary rRNA binding proteins, it binds directly to 16S rRNA where it helps nucleate assembly of the platform of the 30S subunit by binding and bridging several RNA helices of the 16S rRNA. In terms of biological role, forms an intersubunit bridge (bridge B4) with the 23S rRNA of the 50S subunit in the ribosome. This is Small ribosomal subunit protein uS15 from Roseobacter denitrificans (strain ATCC 33942 / OCh 114) (Erythrobacter sp. (strain OCh 114)).